The sequence spans 1069 residues: Carbamoyl phosphate synthase large chain (1069 aa).

The carboxyphosphate synthetic domain stretch occupies residues 1 to 401 (MPLNKDIKKV…AFLKGIRSLE (401 aa)). The ATP site is built by arginine 129, arginine 169, glycine 175, glycine 176, lysine 208, valine 210, glutamate 215, glycine 241, isoleucine 242, histidine 243, glutamine 284, and glutamate 298. The ATP-grasp 1 domain maps to 133–327 (RDMMNRIGEP…IAKLAAKIAL (195 aa)). Mg(2+)-binding residues include glutamine 284, glutamate 298, and asparagine 300. Mn(2+) is bound by residues glutamine 284, glutamate 298, and asparagine 300. Residues 402-549 (IGKYSLDHNK…YSTYEQYDEV (148 aa)) form an oligomerization domain region. Residues 550–932 (EVSNNKKVIV…ALYKGFVGAY (383 aa)) are carbamoyl phosphate synthetic domain. The 191-residue stretch at 674-864 (DELLERLGIS…IVDLATQVML (191 aa)) folds into the ATP-grasp 2 domain. Residues arginine 710, lysine 749, leucine 751, glutamate 755, glycine 780, valine 781, histidine 782, serine 783, glutamine 823, and glutamate 835 each coordinate ATP. 3 residues coordinate Mg(2+): glutamine 823, glutamate 835, and asparagine 837. Glutamine 823, glutamate 835, and asparagine 837 together coordinate Mn(2+). The 138-residue stretch at 932–1069 (YMYPSKEKGK…KDLEVFNIAK (138 aa)) folds into the MGS-like domain. The tract at residues 933–1069 (MYPSKEKGKI…KDLEVFNIAK (137 aa)) is allosteric domain.

This sequence belongs to the CarB family. In terms of assembly, composed of two chains; the small (or glutamine) chain promotes the hydrolysis of glutamine to ammonia, which is used by the large (or ammonia) chain to synthesize carbamoyl phosphate. Tetramer of heterodimers (alpha,beta)4. The cofactor is Mg(2+). Mn(2+) is required as a cofactor.

The catalysed reaction is hydrogencarbonate + L-glutamine + 2 ATP + H2O = carbamoyl phosphate + L-glutamate + 2 ADP + phosphate + 2 H(+). The enzyme catalyses hydrogencarbonate + NH4(+) + 2 ATP = carbamoyl phosphate + 2 ADP + phosphate + 2 H(+). The protein operates within amino-acid biosynthesis; L-arginine biosynthesis; carbamoyl phosphate from bicarbonate: step 1/1. It functions in the pathway pyrimidine metabolism; UMP biosynthesis via de novo pathway; (S)-dihydroorotate from bicarbonate: step 1/3. Functionally, large subunit of the glutamine-dependent carbamoyl phosphate synthetase (CPSase). CPSase catalyzes the formation of carbamoyl phosphate from the ammonia moiety of glutamine, carbonate, and phosphate donated by ATP, constituting the first step of 2 biosynthetic pathways, one leading to arginine and/or urea and the other to pyrimidine nucleotides. The large subunit (synthetase) binds the substrates ammonia (free or transferred from glutamine from the small subunit), hydrogencarbonate and ATP and carries out an ATP-coupled ligase reaction, activating hydrogencarbonate by forming carboxy phosphate which reacts with ammonia to form carbamoyl phosphate. This is Carbamoyl phosphate synthase large chain from Clostridium beijerinckii (strain ATCC 51743 / NCIMB 8052) (Clostridium acetobutylicum).